The sequence spans 1241 residues: ATP-dependent helicase/nuclease subunit A (1241 aa).

A UvrD-like helicase ATP-binding domain is found at 12–485 (SQWTDDQWKA…IDLAKNFRSR (474 aa)). 33–40 (AAAGSGKT) is an ATP binding site. The 301-residue stretch at 505–805 (GEIDYDADAE…RIMTIHKSKG (301 aa)) folds into the UvrD-like helicase C-terminal domain.

It belongs to the helicase family. AddA subfamily. Heterodimer of AddA and AddB/RexB. It depends on Mg(2+) as a cofactor.

It carries out the reaction Couples ATP hydrolysis with the unwinding of duplex DNA by translocating in the 3'-5' direction.. The catalysed reaction is ATP + H2O = ADP + phosphate + H(+). Its function is as follows. The heterodimer acts as both an ATP-dependent DNA helicase and an ATP-dependent, dual-direction single-stranded exonuclease. Recognizes the chi site generating a DNA molecule suitable for the initiation of homologous recombination. The AddA nuclease domain is required for chi fragment generation; this subunit has the helicase and 3' -&gt; 5' nuclease activities. The sequence is that of ATP-dependent helicase/nuclease subunit A from Bacillus anthracis.